Here is a 346-residue protein sequence, read N- to C-terminus: UPF0283 membrane protein VIBHAR_01918 (346 aa).

Over residues 1–17 (MSELKQKQVFKEKVMHS) the composition is skewed to basic and acidic residues. The segment at 1-28 (MSELKQKQVFKEKVMHSEEEDVSPELNT) is disordered. 2 consecutive transmembrane segments (helical) span residues 73 to 93 (LFATFAGLVVWQAVDSVITAI) and 98 to 118 (WLALGWVGFITTIASFGLGAL).

Belongs to the UPF0283 family.

The protein localises to the cell inner membrane. This Vibrio campbellii (strain ATCC BAA-1116) protein is UPF0283 membrane protein VIBHAR_01918.